A 131-amino-acid polypeptide reads, in one-letter code: Global transcriptional regulator Spx 2 (131 aa).

The cysteines at positions 10 and 13 are disulfide-linked.

The protein belongs to the ArsC family. Spx subfamily. As to quaternary structure, interacts with the C-terminal domain of the alpha subunit of the RNAP.

The protein localises to the cytoplasm. Its function is as follows. Global transcriptional regulator that plays a key role in stress response and exerts either positive or negative regulation of genes. Acts by interacting with the C-terminal domain of the alpha subunit of the RNA polymerase (RNAP). This interaction can enhance binding of RNAP to the promoter region of target genes and stimulate their transcription, or block interaction of RNAP with activator. The protein is Global transcriptional regulator Spx 2 of Bacillus cereus (strain ATCC 14579 / DSM 31 / CCUG 7414 / JCM 2152 / NBRC 15305 / NCIMB 9373 / NCTC 2599 / NRRL B-3711).